The primary structure comprises 490 residues: Angiopoietin-related protein 1 (490 aa).

The first 22 residues, 1–22, serve as a signal peptide directing secretion; sequence MKAFVWTLSVLLFLLGSGHCKG. Residues 79 to 167 adopt a coiled-coil conformation; the sequence is ITRMDLENLK…LNVTTEMLKM (89 aa). N-linked (GlcNAc...) asparagine glycosylation is found at Asn-159 and Asn-187. Positions 270–490 constitute a Fibrinogen C-terminal domain; the sequence is FINEGPFKDC…AVQMMIKPID (221 aa). 2 disulfide bridges follow: Cys-279/Cys-308 and Cys-431/Cys-444.

The protein localises to the secreted. This is Angiopoietin-related protein 1 (Angptl1) from Mus musculus (Mouse).